A 357-amino-acid polypeptide reads, in one-letter code: DNA replication and repair protein RecF (357 aa).

An ATP-binding site is contributed by 30 to 37 (GANGSGKT).

The protein belongs to the RecF family.

It is found in the cytoplasm. Its function is as follows. The RecF protein is involved in DNA metabolism; it is required for DNA replication and normal SOS inducibility. RecF binds preferentially to single-stranded, linear DNA. It also seems to bind ATP. The polypeptide is DNA replication and repair protein RecF (Shigella dysenteriae serotype 1 (strain Sd197)).